Here is a 447-residue protein sequence, read N- to C-terminus: Probable glycine dehydrogenase (decarboxylating) subunit 1 (447 aa).

It belongs to the GcvP family. N-terminal subunit subfamily. In terms of assembly, the glycine cleavage system is composed of four proteins: P, T, L and H. In this organism, the P 'protein' is a heterodimer of two subunits.

The catalysed reaction is N(6)-[(R)-lipoyl]-L-lysyl-[glycine-cleavage complex H protein] + glycine + H(+) = N(6)-[(R)-S(8)-aminomethyldihydrolipoyl]-L-lysyl-[glycine-cleavage complex H protein] + CO2. The glycine cleavage system catalyzes the degradation of glycine. The P protein binds the alpha-amino group of glycine through its pyridoxal phosphate cofactor; CO(2) is released and the remaining methylamine moiety is then transferred to the lipoamide cofactor of the H protein. The sequence is that of Probable glycine dehydrogenase (decarboxylating) subunit 1 from Bacillus cereus (strain AH187).